The sequence spans 604 residues: Pescadillo homolog (604 aa).

Positions 349–448 constitute a BRCT domain; it reads PTSTLFSKFI…ELLPVNKYAP (100 aa). Disordered stretches follow at residues 452–562 and 579–604; these read LPPH…MTNK and TRTQ…LSKK. Coiled coils occupy residues 468–522 and 573–604; these read EAEK…LEAA and GIDK…LSKK. Acidic residues predominate over residues 476-510; the sequence is ENAEEEEEDEVDEDDEDADEDEEDEEEEDEEEDED. Over residues 593-604 the composition is skewed to basic and acidic residues; that stretch reads KTKAQLDKLSKK.

This sequence belongs to the pescadillo family. As to quaternary structure, component of the NOP7 complex, composed of ERB1, NOP7 and YTM1. The complex is held together by ERB1, which interacts with NOP7 via its N-terminal domain and with YTM1 via a high-affinity interaction between the seven-bladed beta-propeller domains of the 2 proteins. The NOP7 complex associates with the 66S pre-ribosome.

It localises to the nucleus. The protein resides in the nucleolus. The protein localises to the nucleoplasm. Component of the NOP7 complex, which is required for maturation of the 25S and 5.8S ribosomal RNAs and formation of the 60S ribosome. The sequence is that of Pescadillo homolog from Scheffersomyces stipitis (strain ATCC 58785 / CBS 6054 / NBRC 10063 / NRRL Y-11545) (Yeast).